The following is a 113-amino-acid chain: Cell cycle protein GpsB (113 aa).

Residues 36–65 (IKDYETYAALVKSLRQEIADLKEELARKPQ) are a coiled coil. The segment at 61–82 (ARKPQVSSAPSPSHPDPIDVAA) is disordered.

It belongs to the GpsB family. Forms polymers through the coiled coil domains. Interacts with PBP1, MreC and EzrA.

It localises to the cytoplasm. Its function is as follows. Divisome component that associates with the complex late in its assembly, after the Z-ring is formed, and is dependent on DivIC and PBP2B for its recruitment to the divisome. Together with EzrA, is a key component of the system that regulates PBP1 localization during cell cycle progression. Its main role could be the removal of PBP1 from the cell pole after pole maturation is completed. Also contributes to the recruitment of PBP1 to the division complex. Not essential for septum formation. The polypeptide is Cell cycle protein GpsB (Streptococcus pneumoniae (strain Hungary19A-6)).